The following is a 516-amino-acid chain: Gamma-aminobutyrate transaminase 1, mitochondrial (516 aa).

The transit peptide at 1 to 47 directs the protein to the mitochondrion; that stretch reads MVIARGLLRSNASSSSSQAINLLKYVTSTGSLQGHTQNLCDASTRHF. A compositionally biased stretch (polar residues) spans 45 to 60; that stretch reads RHFSSVPSPQSNSTEE. Positions 45-64 are disordered; it reads RHFSSVPSPQSNSTEENGFK. Residue 171-172 participates in pyridoxal 5'-phosphate binding; it reads GS. Residue Y204 participates in substrate binding. Pyridoxal 5'-phosphate is bound at residue D311. Residue K340 coordinates substrate. K340 bears the N6-(pyridoxal phosphate)lysine mark.

Belongs to the class-III pyridoxal-phosphate-dependent aminotransferase family.

The protein resides in the mitochondrion. It catalyses the reaction 4-aminobutanoate + pyruvate = succinate semialdehyde + L-alanine. The enzyme catalyses 4-aminobutanoate + glyoxylate = succinate semialdehyde + glycine. In terms of biological role, transaminase that degrades gamma-amino butyric acid (GABA) and uses pyruvate as amino-group acceptor, but not 2-oxoglutarate. This Oryza sativa subsp. indica (Rice) protein is Gamma-aminobutyrate transaminase 1, mitochondrial.